The sequence spans 241 residues: Small ribosomal subunit protein uS3 (241 aa).

The region spanning I39–R107 is the KH type-2 domain. The segment at A214 to A241 is disordered.

This sequence belongs to the universal ribosomal protein uS3 family. Part of the 30S ribosomal subunit. Forms a tight complex with proteins S10 and S14.

Its function is as follows. Binds the lower part of the 30S subunit head. Binds mRNA in the 70S ribosome, positioning it for translation. This Mesorhizobium japonicum (strain LMG 29417 / CECT 9101 / MAFF 303099) (Mesorhizobium loti (strain MAFF 303099)) protein is Small ribosomal subunit protein uS3.